Reading from the N-terminus, the 147-residue chain is Large ribosomal subunit protein uL13 (147 aa).

This sequence belongs to the universal ribosomal protein uL13 family. As to quaternary structure, part of the 50S ribosomal subunit.

Its function is as follows. This protein is one of the early assembly proteins of the 50S ribosomal subunit, although it is not seen to bind rRNA by itself. It is important during the early stages of 50S assembly. In Pediococcus pentosaceus (strain ATCC 25745 / CCUG 21536 / LMG 10740 / 183-1w), this protein is Large ribosomal subunit protein uL13.